The sequence spans 132 residues: Small ribosomal subunit protein uS11 (132 aa).

The interval 1 to 24 (MAAPKQAARKPRRRDRKSVPVGQA) is disordered. Over residues 7-16 (AARKPRRRDR) the composition is skewed to basic residues.

The protein belongs to the universal ribosomal protein uS11 family. Part of the 30S ribosomal subunit. Interacts with proteins S7 and S18. Binds to IF-3.

Its function is as follows. Located on the platform of the 30S subunit, it bridges several disparate RNA helices of the 16S rRNA. Forms part of the Shine-Dalgarno cleft in the 70S ribosome. This is Small ribosomal subunit protein uS11 from Bifidobacterium longum (strain DJO10A).